The primary structure comprises 364 residues: tRNA 2-selenouridine synthase (364 aa).

The Rhodanese domain maps to 14 to 137 (LIADTPIIDV…LRQTAIQATI (124 aa)). Residue Cys-97 is the S-selanylcysteine intermediate of the active site.

It belongs to the SelU family. Monomer.

It catalyses the reaction 5-methylaminomethyl-2-thiouridine(34) in tRNA + selenophosphate + (2E)-geranyl diphosphate + H2O + H(+) = 5-methylaminomethyl-2-selenouridine(34) in tRNA + (2E)-thiogeraniol + phosphate + diphosphate. The enzyme catalyses 5-methylaminomethyl-2-thiouridine(34) in tRNA + (2E)-geranyl diphosphate = 5-methylaminomethyl-S-(2E)-geranyl-thiouridine(34) in tRNA + diphosphate. It carries out the reaction 5-methylaminomethyl-S-(2E)-geranyl-thiouridine(34) in tRNA + selenophosphate + H(+) = 5-methylaminomethyl-2-(Se-phospho)selenouridine(34) in tRNA + (2E)-thiogeraniol. The catalysed reaction is 5-methylaminomethyl-2-(Se-phospho)selenouridine(34) in tRNA + H2O = 5-methylaminomethyl-2-selenouridine(34) in tRNA + phosphate. Functionally, involved in the post-transcriptional modification of the uridine at the wobble position (U34) of tRNA(Lys), tRNA(Glu) and tRNA(Gln). Catalyzes the conversion of 2-thiouridine (S2U-RNA) to 2-selenouridine (Se2U-RNA). Acts in a two-step process involving geranylation of 2-thiouridine (S2U) to S-geranyl-2-thiouridine (geS2U) and subsequent selenation of the latter derivative to 2-selenouridine (Se2U) in the tRNA chain. The polypeptide is tRNA 2-selenouridine synthase (Escherichia coli O17:K52:H18 (strain UMN026 / ExPEC)).